Consider the following 67-residue polypeptide: uncharacterized protein (67 aa).

The signal sequence occupies residues M1 to A28. N39 carries N-linked (GlcNAc...) asparagine; by host glycosylation.

This is an uncharacterized protein from Invertebrate iridescent virus 3 (IIV-3).